A 147-amino-acid chain; its full sequence is MRTYSPKPGDVTRQWHVIDAQDVVLGRLATTAASILRGKHKPIYAPHVDTGDFVIIINADKVHLSGNKRTQKMAYRHSGYPGGLRSVRYDELLDKNPEKAVEKAIKGMLPKNSLGRQMLSKLKVYKGDQHPHGAQQPQPFEITQVAQ.

The segment at 128-147 is disordered; the sequence is DQHPHGAQQPQPFEITQVAQ.

The protein belongs to the universal ribosomal protein uL13 family. As to quaternary structure, part of the 50S ribosomal subunit.

Its function is as follows. This protein is one of the early assembly proteins of the 50S ribosomal subunit, although it is not seen to bind rRNA by itself. It is important during the early stages of 50S assembly. This chain is Large ribosomal subunit protein uL13, found in Streptomyces coelicolor (strain ATCC BAA-471 / A3(2) / M145).